We begin with the raw amino-acid sequence, 823 residues long: Protein FAM193B (823 aa).

Disordered stretches follow at residues 1–78 (MTRR…TSQS), 158–191 (SCKSQSCGGDSHSSSSSSSSSSSSSSSCHGNSGD), 209–281 (SPHS…PTTP), and 381–409 (CEADEGLGEEEDSSSERSSCTSSSTHQRD). The span at 26–36 (PQAPEPPPPPS) shows a compositional bias: pro residues. Residues 52–64 (PYRDDPREEDEPK) are compositionally biased toward basic and acidic residues. 2 stretches are compositionally biased toward low complexity: residues 168-184 (SHSSSSSSSSSSSSSSS) and 263-281 (SHPGSFGSPPHPHLLPTTP). The segment covering 382–393 (EADEGLGEEEDS) has biased composition (acidic residues). Residues 422–484 (GHNAEKEKAQ…RLQEIKNTVK (63 aa)) are a coiled coil. Disordered regions lie at residues 503 to 583 (FSKE…PENG) and 599 to 775 (WVKT…PKDM). Composition is skewed to polar residues over residues 516 to 526 (LAPSNPSGSSE) and 641 to 657 (QGNQAKKSEVSPASQSP). Residues serine 694, serine 706, and serine 813 each carry the phosphoserine modification.

Belongs to the FAM193 family.

It localises to the cytoplasm. The protein resides in the nucleus. This Bos taurus (Bovine) protein is Protein FAM193B (FAM193B).